A 105-amino-acid chain; its full sequence is NADH-quinone oxidoreductase subunit K (105 aa).

A run of 3 helical transmembrane segments spans residues L4–V24, I28–A48, and L66–V86.

This sequence belongs to the complex I subunit 4L family. As to quaternary structure, NDH-1 is composed of 14 different subunits. Subunits NuoA, H, J, K, L, M, N constitute the membrane sector of the complex.

It is found in the cell inner membrane. The enzyme catalyses a quinone + NADH + 5 H(+)(in) = a quinol + NAD(+) + 4 H(+)(out). In terms of biological role, NDH-1 shuttles electrons from NADH, via FMN and iron-sulfur (Fe-S) centers, to quinones in the respiratory chain. The immediate electron acceptor for the enzyme in this species is believed to be ubiquinone. Couples the redox reaction to proton translocation (for every two electrons transferred, four hydrogen ions are translocated across the cytoplasmic membrane), and thus conserves the redox energy in a proton gradient. The protein is NADH-quinone oxidoreductase subunit K of Akkermansia muciniphila (strain ATCC BAA-835 / DSM 22959 / JCM 33894 / BCRC 81048 / CCUG 64013 / CIP 107961 / Muc).